Consider the following 323-residue polypeptide: MIDFGNFYSLIAKNHLSHWLETLPAQIANWQREQQHGLFKQWSNAVEFLPEIKPYRLDLLHSVTAESEEPLSAGQIKRIETLMRNLMPWRKGPFSLYGVNIDTEWRSDWKWDRVLPHLSDLTGRTILDVGCGSGYHMWRMIGAGAHLAVGIDPTQLFLCQFEAVRKLLGNDQRAHLLPLGIEQLPALKAFDTVFSMGVLYHRRSPLEHLWQLKDQLVNEGELVLETLVIDGDENTVLVPGDRYAQMRNVYFIPSALALKNWLKKCGFVDIRIADVSVTTTEEQRRTEWMVTESLADFLDPHDPGKTVEGYPAPKRAVLIARKP.

Carboxy-S-adenosyl-L-methionine is bound by residues Lys-91, Trp-105, Lys-110, Gly-130, 152–154 (DPT), 181–182 (IE), Met-196, Tyr-200, and Arg-315.

This sequence belongs to the class I-like SAM-binding methyltransferase superfamily. CmoB family. In terms of assembly, homotetramer.

It catalyses the reaction carboxy-S-adenosyl-L-methionine + 5-hydroxyuridine(34) in tRNA = 5-carboxymethoxyuridine(34) in tRNA + S-adenosyl-L-homocysteine + H(+). Functionally, catalyzes carboxymethyl transfer from carboxy-S-adenosyl-L-methionine (Cx-SAM) to 5-hydroxyuridine (ho5U) to form 5-carboxymethoxyuridine (cmo5U) at position 34 in tRNAs. This Escherichia coli (strain K12 / MC4100 / BW2952) protein is tRNA U34 carboxymethyltransferase.